The chain runs to 500 residues: MPVLLPSTDRDQDSRVGAPEWHQAAKATSRKAHLLTDRCGKEAVTMWQPKDSVLDPNVAHHLGRAAYMEPWRFRVEMLKGGGTVEKPPPGEGVTLWKGKMKPPAWYARLPLPMHRDARAQQTAEVVHAHARGARLTAARLGRAQHQINGQLRLLLRQREATDRRLSEVRKGLLINEQSVKLRGYRPKCEKIPDKADSMLVWEREELKSMKRKMEKDMERSEALLKALASCRDTLDFYCQERLQAVGLMNQPLDKVLEQAGRHSWVDITRPPTPRTQGLKTPPPDPVGAYTPACAKALFEAKRLLMESKDILAELAKNEVDIQNQQQEISDRVCNSLAQKMRETLELKERMTMTLGLMRGTIHRCMKFNQEMYVTRGLIKGPLLKRDLEAREKLNRPLVRMYQRHVGTQLPEATRLAQGTDLLTRHNLQMEKNLKELRTTHDNLAWSLNCKKIGHDVDYDVVRLRLRQLHPHVCYEQAKRLINDWDPRTPPPCSRTNTSSK.

The tract at residues 1-25 (MPVLLPSTDRDQDSRVGAPEWHQAA) is disordered. Residue serine 14 is modified to Phosphoserine. Residues 198–229 (MLVWEREELKSMKRKMEKDMERSEALLKALAS) adopt a coiled-coil conformation. The segment at 265 to 286 (VDITRPPTPRTQGLKTPPPDPV) is disordered. At tyrosine 372 the chain carries Phosphotyrosine. Residues 422 to 448 (LTRHNLQMEKNLKELRTTHDNLAWSLN) are a coiled coil.

In terms of assembly, microtubule inner protein component of sperm flagellar doublet microtubules.

The protein localises to the cytoplasm. The protein resides in the cytoskeleton. It is found in the flagellum axoneme. Its function is as follows. Microtubule inner protein (MIP) part of the dynein-decorated doublet microtubules (DMTs) in sperm flagellar axoneme, which is required for motile flagellum beating. Forms an extensive interaction network cross-linking the lumen of axonemal doublet microtubules. The chain is Tektin-like protein 1 from Rattus norvegicus (Rat).